We begin with the raw amino-acid sequence, 285 residues long: Bifunctional protein FolD (285 aa).

Residues 166–168 (GAS) and Ile-232 each bind NADP(+).

Belongs to the tetrahydrofolate dehydrogenase/cyclohydrolase family. As to quaternary structure, homodimer.

It catalyses the reaction (6R)-5,10-methylene-5,6,7,8-tetrahydrofolate + NADP(+) = (6R)-5,10-methenyltetrahydrofolate + NADPH. The catalysed reaction is (6R)-5,10-methenyltetrahydrofolate + H2O = (6R)-10-formyltetrahydrofolate + H(+). It participates in one-carbon metabolism; tetrahydrofolate interconversion. Its function is as follows. Catalyzes the oxidation of 5,10-methylenetetrahydrofolate to 5,10-methenyltetrahydrofolate and then the hydrolysis of 5,10-methenyltetrahydrofolate to 10-formyltetrahydrofolate. In Actinobacillus succinogenes (strain ATCC 55618 / DSM 22257 / CCUG 43843 / 130Z), this protein is Bifunctional protein FolD.